The primary structure comprises 277 residues: Shikimate dehydrogenase (NADP(+)) (277 aa).

Shikimate is bound by residues Ser-19–Ser-21 and Thr-66. Catalysis depends on Lys-70, which acts as the Proton acceptor. Asp-82 contacts NADP(+). Asn-91 and Asp-107 together coordinate shikimate. NADP(+) is bound by residues Gly-133 to Ala-137, Asn-157 to Arg-162, and Leu-222. Shikimate is bound at residue Tyr-224. Residue Gly-245 participates in NADP(+) binding.

This sequence belongs to the shikimate dehydrogenase family. In terms of assembly, homodimer.

The enzyme catalyses shikimate + NADP(+) = 3-dehydroshikimate + NADPH + H(+). The protein operates within metabolic intermediate biosynthesis; chorismate biosynthesis; chorismate from D-erythrose 4-phosphate and phosphoenolpyruvate: step 4/7. Its function is as follows. Involved in the biosynthesis of the chorismate, which leads to the biosynthesis of aromatic amino acids. Catalyzes the reversible NADPH linked reduction of 3-dehydroshikimate (DHSA) to yield shikimate (SA). The protein is Shikimate dehydrogenase (NADP(+)) of Roseobacter denitrificans (strain ATCC 33942 / OCh 114) (Erythrobacter sp. (strain OCh 114)).